A 233-amino-acid polypeptide reads, in one-letter code: MPKHSKRYLEARKLVDRTKYYDLDEAIELVKKTATAKFDETIELHIQTGIDYRKPEQHIRGTIVLPHGTGKEVKVLVFAKGEKAKEALEAGADYVGAEDLVEKIEKEGFLDFDVAIATPDMMRIIGRLGKILGPRGLMPSPKSGTVTQEVAEAVKEFKKGRIEVRTDKTGNIHIPVGKRSFDNEKLKENIIAAIKQIMQMKPAGVKGQFIKKAVLSSTMGPGIKLNLQSLLKE.

The protein belongs to the universal ribosomal protein uL1 family. In terms of assembly, part of the 50S ribosomal subunit.

Functionally, binds directly to 23S rRNA. The L1 stalk is quite mobile in the ribosome, and is involved in E site tRNA release. Its function is as follows. Protein L1 is also a translational repressor protein, it controls the translation of the L11 operon by binding to its mRNA. The chain is Large ribosomal subunit protein uL1 from Thermotoga sp. (strain RQ2).